Here is a 357-residue protein sequence, read N- to C-terminus: MADSLVLLTGATGFIGFRILVELLRQGYSVRAVIRSAAKGQWLESRLTAVMKGSDYKDRFQTTIVADFVTDGAFDQAAENTSYIIHVASPIVSSDNPDDWEHDFKRVAVKGSIGVLEAAKRSGTVRRVVITSSMVGLFSPKALFAEPSEVPLNAESRIPEMEPPYAHKMLAYQAGKIASINSAEAWIKHEKPAFDLIHMHPSFVTGRDDLATTREDLRKFSSNWHSMQIVLGHKNPIGKPILTCHNDDVARCHVSALDPKVAGNQSFLISCSPEDGSEWDNVKKIVQREFPEAVAQGVLPNDGHMPTVNKGVRFDVRKTEETFGFKHIPYEAQVLDVVKQYLELPEKDEGVEISTTA.

Residue tyrosine 172 participates in NADP(+) binding.

It belongs to the NAD(P)-dependent epimerase/dehydratase family. Dihydroflavonol-4-reductase subfamily.

It participates in mycotoxin biosynthesis. Ketoreductase; part of the gene cluster that mediates the biosynthesis of cercosporin, a light-activated, non-host-selective toxin. The perylenequinone chromophore of cercosporin absorbs light energy to attain an electronically-activated triplet state and produces active oxygen species such as the hydroxyl radical, superoxide, hydrogen peroxide or singlet oxygen upon reaction with oxygen molecules. These reactive oxygen species cause damage to various cellular components including lipids, proteins and nucleic acids. The first step of cercosporin biosynthesis is performed by the polyketide synthase CTB1 which catalyzes the formation of nor-toralactone. The starter unit acyltransferase (SAT) domain of CTB1 initiates polyketide extension by the selective utilization of acetyl-CoA, which is elongated to the heptaketide in the beta-ketoacyl synthase (KS) domain by successive condensations with six malonyl units introduced by the malonyl acyltransferase (MAT) domain. The product template (PT) domain catalyzes C4-C9 and C2-C11 aldol cyclizations and dehydrations to a trihydroxynaphthalene, which is thought to be delivered to the thioesterase (TE) domain for product release. The bifunctional enzyme CTB3 then methylates nor-toralactone to toralactone before conducting an unusual oxidative aromatic ring opening. The O-methyltransferase CTB2 further methylates the nascent OH-6 of the CBT3 product, blocking further oxidation at this site before the reductase CTB6 reduces the 2-oxopropyl ketone at position C7, giving naphthalene. The FAD-dependent monooxygenase CTB5 in concert with the multicopper oxidase CTB12 are responsible for homodimerization of naphthalene with CTB7 installing the dioxepine moiety, finally producing cercosporin. The fasciclin domain-containing protein CTB11 might act with CTB5 and CTB12 whereas the roles of CTB9 and CTB10 have still to be elucidated. The polypeptide is Ketoreductase CTB6 (Cercospora nicotianae (Barn spot disease fungus)).